Reading from the N-terminus, the 652-residue chain is Carboxypeptidase Z (652 aa).

The signal sequence occupies residues methionine 1 to alanine 18. One can recognise an FZ domain in the interval asparagine 27–proline 160. Cystine bridges form between cysteine 43–cysteine 109, cysteine 51–cysteine 102, cysteine 93–cysteine 129, cysteine 118–cysteine 157, and cysteine 122–cysteine 146. In terms of domain architecture, Peptidase M14 spans serine 186 to valine 502. 2 residues coordinate Zn(2+): histidine 248 and glutamate 251. Asparagine 281 is a glycosylation site (N-linked (GlcNAc...) asparagine). Zn(2+) is bound at residue histidine 380. Catalysis depends on glutamate 472, which acts as the Proton donor/acceptor. Positions leucine 595–glycine 629 are disordered.

The protein belongs to the peptidase M14 family. Zn(2+) serves as cofactor. In placenta, it is present within invasive trophoblasts and in the surrounding extracellular space. Also present in amnion cells, but is not readily apparent in the extracellular matrix of this cell type. Present in normal pituitary gland and neoplastic pituitary gland (especially POMC-, GH- and PRL-producing adenomas) (at protein level). Widely expressed.

The protein resides in the secreted. It localises to the extracellular space. Its subcellular location is the extracellular matrix. Its activity is regulated as follows. Inhibited by 2-mercaptomethyl-3-guanidinoethylthiopropanoic acid (MGTA) and guanidinoethylmercaptosuccinic acid (GEMSA). Inhibited by chelating agents such as EDTA and EGTA. Functionally, cleaves substrates with C-terminal arginine residues. Probably modulates the Wnt signaling pathway, by cleaving some undefined protein. May play a role in cleavage during prohormone processing. This is Carboxypeptidase Z (CPZ) from Homo sapiens (Human).